Consider the following 34-residue polypeptide: Leader peptide SpeFL (34 aa).

The sensor domain stretch occupies residues 1–13 (MENNSRTMPHIRR). The Ornithine recognition loop motif lies at 10 to 16 (HIRRTTH). R13 lines the L-ornithine pocket. Residues 14 to 34 (TTHIMKFAHRNSFDFHFFNAR) are effector domain.

The protein belongs to the speF operon leader peptide family. As to quaternary structure, binds ornithine in stalled 70S ribosomes, blocking the upper two-thirds of the exit tunnel. Contacts 23S rRNA and ribosomal proteins L4 and L22.

Its function is as follows. A small protein (arrest peptide) encoded upstream of inducible ornithine carboxylase gene (speF) that controls expression of downstream genes (speF and patE) by nascent chain-translational arrest and transcriptional attenuation. In the presence of ornithine a toeprint due to ribosomal arrest can be seen on the speFL transcript. Only L-ornithine (not other tested amino acids) has this effect. It is thought that in the presence of ornithine, ribosomal stalling on speFL prevents binding of Rho transcription termination factor to a downstream rut site allowing transcription of the operon. In the absence of ornithine, ribosomes terminate translation and are recycled, exposing the rut site allowing Rho to bind and prematurely terminate transcription. The presence of a pair of rare Arg codons could slow down translation to prevent polysome accumulation and to expose the rut site to Rho. In Escherichia coli (strain K12), this protein is Leader peptide SpeFL.